A 208-amino-acid chain; its full sequence is MLKIIIPSIMLIPLTWFSNNKKVWINVTSYSFVINMIALVTLWQVNDITTNFSTMFSTDSLSSPLTMLTIWLLPLMLLASQKHIKNQTDFNKKMYISLLITLQVLLIMTFSANELIMFYILFEATLIPTLIIITRWGNQAERLNAGLYFLFYTLIGSIPLLIALISIQNTLGTLNIMLLSLDSSPQTPTWSSHILWLACIMAFMIKMP.

Transmembrane regions (helical) follow at residues 23–43 (VWIN…VTLW), 60–80 (SLSS…LLAS), 93–113 (KMYI…FSAN), 114–134 (ELIM…IIIT), 147–167 (LYFL…LISI), and 188–208 (PTWS…IKMP).

The protein belongs to the complex I subunit 4 family. In terms of assembly, core subunit of respiratory chain NADH dehydrogenase (Complex I) which is composed of 45 different subunits.

The protein localises to the mitochondrion inner membrane. It carries out the reaction a ubiquinone + NADH + 5 H(+)(in) = a ubiquinol + NAD(+) + 4 H(+)(out). Core subunit of the mitochondrial membrane respiratory chain NADH dehydrogenase (Complex I) which catalyzes electron transfer from NADH through the respiratory chain, using ubiquinone as an electron acceptor. Essential for the catalytic activity and assembly of complex I. This is NADH-ubiquinone oxidoreductase chain 4 (MT-ND4) from Phodopus sungorus (Striped hairy-footed hamster).